Reading from the N-terminus, the 368-residue chain is Ethanol acetyltransferase 1 (368 aa).

Residues 1–21 (MFLSLRPSLSVSRLAVVRRAY) constitute a mitochondrion transit peptide. In terms of domain architecture, AB hydrolase-1 spans 67-171 (PIIFFHGLLG…IIDNAPEPQP (105 aa)). Active-site charge relay system residues include S140, D164, and H315. Positions 344-368 (RNKDPNNYMQTQNSISNSDTMGQSL) are disordered. Polar residues predominate over residues 348–368 (PNNYMQTQNSISNSDTMGQSL).

This sequence belongs to the AB hydrolase superfamily.

The protein localises to the mitochondrion. It catalyses the reaction ethanol + acetyl-CoA = ethyl acetate + CoA. The catalysed reaction is acetyl-CoA + H2O = acetate + CoA + H(+). The enzyme catalyses ethyl acetate + H2O = ethanol + acetate + H(+). In terms of biological role, alcohol acetyltransferase that catalyzes the synthesis of ethyl acetate from ethanol and acetyl-CoA. Can also function as a thioesterase by hydrolyzing acetyl-CoA in the absence of ethanol, as well as esterase hydrolyzing ethyl acetate. The chain is Ethanol acetyltransferase 1 (EAT1) from Kluyveromyces lactis (strain ATCC 8585 / CBS 2359 / DSM 70799 / NBRC 1267 / NRRL Y-1140 / WM37) (Yeast).